We begin with the raw amino-acid sequence, 326 residues long: MAFISFPPRHPSSSARLPLTLIALDDWALSSITGVDSEKYIQGQVTADVSQMTEQQHLLAAHCDAKGKMWSTLRLFRERDGFAWIERRSVREAQLTELKKYAVFSKVVIAPDDERVLLGVAGFQARAALANVFSELPNSENQVVRDGASTLLWFEHPAERFLLVTDVATANMLTEKLHGEAELNNSQQWLALDIEAGIPVIDAANSGQFIPQATNLQALGGISFKKGCYTGQEMVARAKFRGANKRALWLLAGKASRVPEAGEDLELQMGENWRRTGAILAATQLDDGQLLVQAVMNNDLEAESVFRVRDDANTLHIVPLPYSLEE.

The folate site is built by Trp-27 and Trp-189.

This sequence belongs to the tRNA-modifying YgfZ family.

It is found in the cytoplasm. Folate-binding protein involved in regulating the level of ATP-DnaA and in the modification of some tRNAs. It is probably a key factor in regulatory networks that act via tRNA modification, such as initiation of chromosomal replication. This Salmonella schwarzengrund (strain CVM19633) protein is tRNA-modifying protein YgfZ.